The chain runs to 245 residues: tRNA1(Val) (adenine(37)-N6)-methyltransferase (245 aa).

It belongs to the methyltransferase superfamily. tRNA (adenine-N(6)-)-methyltransferase family.

The protein resides in the cytoplasm. The catalysed reaction is adenosine(37) in tRNA1(Val) + S-adenosyl-L-methionine = N(6)-methyladenosine(37) in tRNA1(Val) + S-adenosyl-L-homocysteine + H(+). In terms of biological role, specifically methylates the adenine in position 37 of tRNA(1)(Val) (anticodon cmo5UAC). This chain is tRNA1(Val) (adenine(37)-N6)-methyltransferase (yfiC), found in Escherichia coli (strain K12).